The chain runs to 287 residues: GPN-loop GTPase 3 (287 aa).

12 to 17 (GAGKST) lines the GTP pocket. Positions 69–71 (GPN) match the Gly-Pro-Asn (GPN)-loop; involved in dimer interface motif. Position 172 to 175 (172 to 175 (SKMD)) interacts with GTP.

Belongs to the GPN-loop GTPase family. As to quaternary structure, heterodimers with GPN1 or GPN2. Binds to RNA polymerase II (RNAPII).

Small GTPase required for proper nuclear import of RNA polymerase II and III (RNAPII and RNAPIII). May act at an RNAP assembly step prior to nuclear import. This is GPN-loop GTPase 3 from Cryptococcus neoformans var. neoformans serotype D (strain B-3501A) (Filobasidiella neoformans).